Consider the following 476-residue polypeptide: Glycogen synthase (476 aa).

Residue Lys-15 coordinates ADP-alpha-D-glucose.

It belongs to the glycosyltransferase 1 family. Bacterial/plant glycogen synthase subfamily.

It catalyses the reaction [(1-&gt;4)-alpha-D-glucosyl](n) + ADP-alpha-D-glucose = [(1-&gt;4)-alpha-D-glucosyl](n+1) + ADP + H(+). The protein operates within glycan biosynthesis; glycogen biosynthesis. Synthesizes alpha-1,4-glucan chains using ADP-glucose. The sequence is that of Glycogen synthase from Yersinia pseudotuberculosis serotype IB (strain PB1/+).